We begin with the raw amino-acid sequence, 443 residues long: Ribosomal protein uS12 methylthiotransferase RimO (443 aa).

Residues 8–118 (PKVGFVSLGC…VVNAVHEVVP (111 aa)) enclose the MTTase N-terminal domain. Positions 17, 53, 82, 151, 155, and 158 each coordinate [4Fe-4S] cluster. Residues 137-375 (LTPRHYAYLK…MAHQQAISAA (239 aa)) enclose the Radical SAM core domain. The TRAM domain maps to 378-443 (QLRIGKEIDV…DEYDMWAEPI (66 aa)).

This sequence belongs to the methylthiotransferase family. RimO subfamily. Requires [4Fe-4S] cluster as cofactor.

It is found in the cytoplasm. The enzyme catalyses L-aspartate(89)-[ribosomal protein uS12]-hydrogen + (sulfur carrier)-SH + AH2 + 2 S-adenosyl-L-methionine = 3-methylsulfanyl-L-aspartate(89)-[ribosomal protein uS12]-hydrogen + (sulfur carrier)-H + 5'-deoxyadenosine + L-methionine + A + S-adenosyl-L-homocysteine + 2 H(+). In terms of biological role, catalyzes the methylthiolation of an aspartic acid residue of ribosomal protein uS12. This is Ribosomal protein uS12 methylthiotransferase RimO from Pseudomonas putida (strain ATCC 700007 / DSM 6899 / JCM 31910 / BCRC 17059 / LMG 24140 / F1).